A 404-amino-acid chain; its full sequence is Argininosuccinate synthase (404 aa).

Residues 12-20 (AYSGGLDTS) and Ala-39 contribute to the ATP site. L-citrulline-binding residues include Tyr-91 and Ser-96. Gly-121 contributes to the ATP binding site. The L-aspartate site is built by Thr-123, Asn-127, and Asp-128. Asn-127 provides a ligand contact to L-citrulline. L-citrulline-binding residues include Arg-131, Ser-180, Ser-189, Glu-265, and Tyr-277.

Belongs to the argininosuccinate synthase family. Type 1 subfamily. In terms of assembly, homotetramer.

The protein resides in the cytoplasm. It catalyses the reaction L-citrulline + L-aspartate + ATP = 2-(N(omega)-L-arginino)succinate + AMP + diphosphate + H(+). The protein operates within amino-acid biosynthesis; L-arginine biosynthesis; L-arginine from L-ornithine and carbamoyl phosphate: step 2/3. This Vibrio parahaemolyticus serotype O3:K6 (strain RIMD 2210633) protein is Argininosuccinate synthase.